An 89-amino-acid chain; its full sequence is Small ribosomal subunit protein uS15 (89 aa).

Belongs to the universal ribosomal protein uS15 family. In terms of assembly, part of the 30S ribosomal subunit. Forms a bridge to the 50S subunit in the 70S ribosome, contacting the 23S rRNA.

In terms of biological role, one of the primary rRNA binding proteins, it binds directly to 16S rRNA where it helps nucleate assembly of the platform of the 30S subunit by binding and bridging several RNA helices of the 16S rRNA. Forms an intersubunit bridge (bridge B4) with the 23S rRNA of the 50S subunit in the ribosome. In Micrococcus luteus (strain ATCC 4698 / DSM 20030 / JCM 1464 / CCM 169 / CCUG 5858 / IAM 1056 / NBRC 3333 / NCIMB 9278 / NCTC 2665 / VKM Ac-2230) (Micrococcus lysodeikticus), this protein is Small ribosomal subunit protein uS15.